The chain runs to 621 residues: Zinc metalloproteinase-disintegrin-like TSV-DM (621 aa).

An N-terminal signal peptide occupies residues 1–20; the sequence is MIQVLLVTICLAVFPYQGSS. Residues 21–191 constitute a propeptide that is removed on maturation; sequence IILESGNVND…EASQSNLTPE (171 aa). Position 192 is a pyrrolidone carboxylic acid (Q192). Residues 200–396 form the Peptidase M12B domain; sequence KYVKFFLVAD…NMPQCILKKP (197 aa). The N-linked (GlcNAc...) asparagine glycan is linked to N219. 3 disulfides stabilise this stretch: C311/C391, C351/C375, and C353/C358. A Zn(2+)-binding site is contributed by H336. E337 is a catalytic residue. The Zn(2+) site is built by H340 and H346. The Disintegrin domain maps to 404 to 489; that stretch reads PPVCGNYFVE…AECTDRFQRN (86 aa). Ca(2+) contacts are provided by V406, N409, F411, E413, E416, and D419. 14 cysteine pairs are disulfide-bonded: C407–C436, C418–C431, C420–C426, C430–C453, C444–C450, C449–C475, C462–C482, C469–C500, C493–C505, C512–C562, C527–C573, C540–C550, C557–C599, and C593–C605. The D/ECD-tripeptide signature appears at 468–470; that stretch reads ECD. Ca(2+)-binding residues include D470, M471, D473, D484, and R485. N502 carries an N-linked (GlcNAc...) asparagine glycan.

It belongs to the venom metalloproteinase (M12B) family. P-III subfamily. P-IIIc sub-subfamily. As to quaternary structure, homodimer; disulfide-linked. Zn(2+) is required as a cofactor. In terms of processing, the N-terminus is blocked. Expressed by the venom gland.

It localises to the secreted. Its activity is regulated as follows. Inhibited by EDTA and DTT, and partially inhibited by EGTA, but not inhibited by PMSF and NEM. Snake venom zinc metalloprotease that hydrolyzes the alpha-chain (FGA) and more slowly the beta-chain (FGB) of fibrinogen. Inhibits cell proliferation and induces cell morphologic changes transiently on human umbilical vein endothelial cells. This Trimeresurus stejnegeri (Chinese green tree viper) protein is Zinc metalloproteinase-disintegrin-like TSV-DM.